Here is a 61-residue protein sequence, read N- to C-terminus: [Thr6]-bradykinyl-Val,Asp (61 aa).

The N-terminal stretch at 1–22 (MSFLKKSLFLVLFLGLVSFSIC) is a signal peptide. Positions 23–50 (EEEKRETEEEENEDEMDKESEEKRESPE) are excised as a propeptide. A disordered region spans residues 24-61 (EEKRETEEEENEDEMDKESEEKRESPERPPGFTPFRVD). Positions 30 to 41 (EEEENEDEMDKE) are enriched in acidic residues. At Pro53 the chain carries 4-hydroxyproline; in form [Hyp3,Thr6]-bradykinyl-Val,Asp and [Hyp3,Thr6]-bradykinin.

It belongs to the frog skin active peptide (FSAP) family. Bradykinin-related peptide subfamily. In terms of tissue distribution, expressed by the skin glands.

It localises to the secreted. Functionally, induces relaxation of rat smooth muscle from tail artery (EC(50)=16.8 nM) and contraction of that from ileum (EC(50)=205 nM), urinary bladder (EC(50)=895 nM) and uterus (EC(50)=60.3 nM). Binds to both bradykinin receptor B1 (BDKRB1) and B2 (BDKRB2). Its function is as follows. [Hyp3,Thr6]-bradykinin: Induces relaxation of rat smooth muscle from tail artery (EC(50)=56.7 nM) and contraction of that from ileum (EC(50)=588 nM), urinary bladder (EC(50)=4.6 uM) and uterus (EC(50)=3.9 nM). Binds to both bradykinin receptor B1 (BDKRB1) and B2 (BDKRB2). In arterial smooth muscle, the effect via BDKRB1 is stronger, in uterus, ileum and urinary bladder that via BDKRB2. In terms of biological role, induces relaxation of rat smooth muscle from tail artery (EC(50)=10.8 nM) and contraction of that from ileum (EC(50)=645 nM), urinary bladder (EC(50)=1.1 uM) and uterus (EC(50)=1.2 uM). Binds to both bradykinin receptor B1 (BDKRB1) and B2 (BDKRB2). Apart from uterus smooth muscle, the effect via B2 is stronger. [Hyp3,Thr6]-bradykinyl-Val,Asp: Induces relaxation of rat smooth muscle from tail artery (EC(50)=3.5 nM) and contraction of that from ileum (EC(50)=223 nM), urinary bladder (EC(50)=1.5 uM) and uterus (EC(50)=356 nM). Binds to both bradykinin receptor B1 (BDKRB1) and B2 (BDKRB2); the effects via B2 a stronger. In Agalychnis callidryas (Red-eyed tree frog), this protein is [Thr6]-bradykinyl-Val,Asp.